Reading from the N-terminus, the 391-residue chain is 3-ketoacyl-CoA thiolase (391 aa).

The Acyl-thioester intermediate role is filled by cysteine 95. Catalysis depends on proton acceptor residues histidine 347 and cysteine 377.

It belongs to the thiolase-like superfamily. Thiolase family. As to quaternary structure, heterotetramer of two alpha chains (FadB) and two beta chains (FadA).

The protein resides in the cytoplasm. The catalysed reaction is an acyl-CoA + acetyl-CoA = a 3-oxoacyl-CoA + CoA. It functions in the pathway lipid metabolism; fatty acid beta-oxidation. Its function is as follows. Catalyzes the final step of fatty acid oxidation in which acetyl-CoA is released and the CoA ester of a fatty acid two carbons shorter is formed. The chain is 3-ketoacyl-CoA thiolase from Vibrio parahaemolyticus serotype O3:K6 (strain RIMD 2210633).